Consider the following 350-residue polypeptide: MPVLHNRISNDALKAKMLAENEPRTTISFYKYFTIADPQTTRDALYKLFTALNVFGRVYLAHEGINAQISVPESHVDKFRQQLYSFDPALNNLRLNIALDDDGKSFWVLRMKVRERIVADGITDPDFDASNVGNYLQAAQVNAMLDDPDALFIDMRNHYEYEVGHFENAMEIPADTFREQLPKAVEMMQEHKDKKIVMYCTGGIRCEKASAWMKHNGFEKVWHIEGGIIEYARKAREQGLPVRFIGKNFVFDERMGERISEDVIAHCHQCGTPCDSHTNCKNDGCHLLFIQCPVCAEKFNGCCSELCCTESALPPEEQRRLRAGRENGNKIFNKSRGRLNTQQGIPELKI.

Positions Asp146–Leu240 constitute a Rhodanese domain. Cys200 functions as the Cysteine persulfide intermediate in the catalytic mechanism.

The protein belongs to the TrhO family.

The catalysed reaction is uridine(34) in tRNA + AH2 + O2 = 5-hydroxyuridine(34) in tRNA + A + H2O. Functionally, catalyzes oxygen-dependent 5-hydroxyuridine (ho5U) modification at position 34 in tRNAs. This is tRNA uridine(34) hydroxylase from Escherichia fergusonii (strain ATCC 35469 / DSM 13698 / CCUG 18766 / IAM 14443 / JCM 21226 / LMG 7866 / NBRC 102419 / NCTC 12128 / CDC 0568-73).